The following is a 396-amino-acid chain: Tryptophan synthase beta chain (396 aa).

At lysine 90 the chain carries N6-(pyridoxal phosphate)lysine.

Belongs to the TrpB family. In terms of assembly, tetramer of two alpha and two beta chains. Requires pyridoxal 5'-phosphate as cofactor.

The catalysed reaction is (1S,2R)-1-C-(indol-3-yl)glycerol 3-phosphate + L-serine = D-glyceraldehyde 3-phosphate + L-tryptophan + H2O. It participates in amino-acid biosynthesis; L-tryptophan biosynthesis; L-tryptophan from chorismate: step 5/5. Its function is as follows. The beta subunit is responsible for the synthesis of L-tryptophan from indole and L-serine. This Clostridium kluyveri (strain NBRC 12016) protein is Tryptophan synthase beta chain.